The following is a 221-amino-acid chain: Very-long-chain (3R)-3-hydroxyacyl-CoA dehydratase PASTICCINO 2 (221 aa).

Residues Met-1 to Val-11 are Cytoplasmic-facing. Residues Tyr-12 to Ile-32 form a helical membrane-spanning segment. Over Thr-33 to Leu-51 the chain is Lumenal. A helical transmembrane segment spans residues Gln-52–Val-70. Over Arg-71 to Ala-76 the chain is Cytoplasmic. A helical transmembrane segment spans residues Thr-77 to Phe-95. Topologically, residues Pro-96–Ser-100 are lumenal. A helical membrane pass occupies residues His-101 to Phe-122. Residues Gly-123–Ser-142 lie on the Cytoplasmic side of the membrane. The chain crosses the membrane as a helical span at residues Phe-143–Ile-165. Residues Tyr-147 and Glu-154 contribute to the active site. The Lumenal segment spans residues Lys-166–Asp-184. Residues Phe-185–Tyr-204 traverse the membrane as a helical segment. The Cytoplasmic portion of the chain corresponds to Arg-205–Glu-221.

It belongs to the very long-chain fatty acids dehydratase HACD family. As to quaternary structure, interacts with CDKA-1; but only with the 'Tyr-15' phosphorylated protein. Interacts with PAS1. Part of the fatty acid elongase complex which contains a beta-ketoacyl-CoA synthase (KCS), a beta-ketoacyl-CoA reductase (KCR), a beta-hydroxyacyl-CoA dehydratase (HCD) and an enoyl-CoA reductase (ECR). As to expression, high expression in young seedlings, roots, root tips, flowers and young siliques. Lower levels in leaves and stems.

It is found in the endoplasmic reticulum membrane. Its subcellular location is the cytoplasm. The protein localises to the nucleus. It carries out the reaction a very-long-chain (3R)-3-hydroxyacyl-CoA = a very-long-chain (2E)-enoyl-CoA + H2O. It participates in lipid metabolism; fatty acid biosynthesis. Functionally, catalyzes the third of the four reactions of the long-chain fatty acids elongation cycle. This endoplasmic reticulum-bound enzymatic process, allows the addition of two carbons to the chain of long- and very long-chain fatty acids/VLCFAs per cycle. This enzyme catalyzes the dehydration of the 3-hydroxyacyl-CoA intermediate into trans-2,3-enoyl-CoA, within each cycle of fatty acid elongation. Thereby, it participates in the production of VLCFAs of different chain lengths that are involved in multiple biological processes as precursors of membrane lipids and lipid mediators. May be an anti-phosphatase that prevents CDKA-1 dephosphorylation and activation. Involved in the hormonal control of cell division and differentiation. Required for proliferation control of meristematic and non-meristematic cells. Negative regulator of the cell cycle. This is Very-long-chain (3R)-3-hydroxyacyl-CoA dehydratase PASTICCINO 2 (PAS2) from Arabidopsis thaliana (Mouse-ear cress).